The following is a 784-amino-acid chain: SWI/SNF complex subunit SWI3C homolog (784 aa).

Residues 1-10 (MPRKASSTSD) show a composition bias toward polar residues. The tract at residues 1–68 (MPRKASSTSD…PEDADDETLA (68 aa)) is disordered. Over residues 24–39 (ASPSPSNRSSAAAAAA) the composition is skewed to low complexity. Residues 43 to 66 (DDSDSAAVNEDDDSAVPEDADDET) show a composition bias toward acidic residues. An SWIRM domain is found at 185-284 (HVVPKHSDWF…YLASGSVHRG (100 aa)). A ZZ-type; degenerate zinc finger spans residues 355 to 409 (LSESSCSYCLQPLTSLHYQSLKEADIALCSDCFHDARYITGHSSLDFQRIDGDND). Cysteine 360, cysteine 363, cysteine 383, and cysteine 386 together coordinate Zn(2+). In terms of domain architecture, SANT spans 413–464 (NDGDSWTDQETLLLLEGIEKYNDNWNNIAEHVGTKSKAQCIYHFIRLPVEDG). Disordered stretches follow at residues 667-702 (LASP…SMPQ) and 760-784 (GMPN…SSVG). Residues 675–695 (PGGSTSTMSSNPMSMSPRPMG) are compositionally biased toward low complexity.

In terms of assembly, interacts with LFR. Interacts with NMCP1.

It localises to the nucleus. It is found in the nucleoplasm. In terms of biological role, component of a multiprotein complex equivalent of the SWI/SNF complex, an ATP-dependent chromatin-remodeling complex, which is required for the positive and negative regulation of gene expression of a large number of genes. It changes chromatin structure by altering DNA-histone contacts within a nucleosome, leading eventually to a change in nucleosome position, thus facilitating or repressing binding of gene-specific transcription factors. May be involved in positive response to drought stress and modulation of root growth through its interaction with NMCP1. The chain is SWI/SNF complex subunit SWI3C homolog from Oryza sativa subsp. japonica (Rice).